The sequence spans 259 residues: 3-deoxy-manno-octulosonate cytidylyltransferase (259 aa).

This sequence belongs to the KdsB family.

The protein localises to the cytoplasm. The enzyme catalyses 3-deoxy-alpha-D-manno-oct-2-ulosonate + CTP = CMP-3-deoxy-beta-D-manno-octulosonate + diphosphate. The protein operates within nucleotide-sugar biosynthesis; CMP-3-deoxy-D-manno-octulosonate biosynthesis; CMP-3-deoxy-D-manno-octulosonate from 3-deoxy-D-manno-octulosonate and CTP: step 1/1. It functions in the pathway bacterial outer membrane biogenesis; lipopolysaccharide biosynthesis. Activates KDO (a required 8-carbon sugar) for incorporation into bacterial lipopolysaccharide in Gram-negative bacteria. The polypeptide is 3-deoxy-manno-octulosonate cytidylyltransferase (Xanthomonas axonopodis pv. citri (strain 306)).